The following is a 283-amino-acid chain: Peroxisomal protein 2 (283 aa).

Positions 281-283 (VKL) match the Peroxisomal target signal 1 (PTS1) motif.

This sequence belongs to the PXP2 family.

Its subcellular location is the peroxisome matrix. It is found in the cytoplasm. The protein localises to the cytosol. Probably involved in peroxisome formation or maintenance as well as in amino acid metabolism. This is Peroxisomal protein 2 from Saccharomyces cerevisiae (strain ATCC 204508 / S288c) (Baker's yeast).